The following is a 146-amino-acid chain: MNPAHLLILAAVCVSPLGASSNRPMPLNLYQFKNMVQCTVPNRSWWDFADYGCYCGRGGSGTPVDDLDRCCQVHDNCYGEAEKISRCWPYFKTYSYECSQGTLTCKGGNNACAAAVCDCDRLAAICFAGAPYNDNNYNIDLKARCQ.

The N-terminal stretch at 1–21 (MNPAHLLILAAVCVSPLGASS) is a signal peptide. Residues 22–27 (NRPMPL) constitute a propeptide that is removed on maturation. 7 cysteine pairs are disulfide-bonded: Cys38/Cys98, Cys53/Cys145, Cys55/Cys71, Cys70/Cys126, Cys77/Cys119, Cys87/Cys112, and Cys105/Cys117. Ca(2+) is bound by residues Tyr54, Gly56, and Gly58. His74 is an active-site residue. Asp75 is a binding site for Ca(2+). The active site involves Asp120.

It belongs to the phospholipase A2 family. Group I subfamily. D49 sub-subfamily. Ca(2+) is required as a cofactor. In terms of tissue distribution, expressed by the venom gland.

It is found in the secreted. It carries out the reaction a 1,2-diacyl-sn-glycero-3-phosphocholine + H2O = a 1-acyl-sn-glycero-3-phosphocholine + a fatty acid + H(+). In terms of biological role, PLA2 catalyzes the calcium-dependent hydrolysis of the 2-acyl groups in 3-sn-phosphoglycerides. This Naja sputatrix (Malayan spitting cobra) protein is Acidic phospholipase A2 C.